A 325-amino-acid chain; its full sequence is tRNA U34 carboxymethyltransferase (325 aa).

Carboxy-S-adenosyl-L-methionine is bound by residues Lys-91, Trp-105, Lys-110, Gly-130, 152-154, 181-182, Met-197, Tyr-201, and Arg-316; these read DPS and ME.

It belongs to the class I-like SAM-binding methyltransferase superfamily. CmoB family. Homotetramer.

The enzyme catalyses carboxy-S-adenosyl-L-methionine + 5-hydroxyuridine(34) in tRNA = 5-carboxymethoxyuridine(34) in tRNA + S-adenosyl-L-homocysteine + H(+). Its function is as follows. Catalyzes carboxymethyl transfer from carboxy-S-adenosyl-L-methionine (Cx-SAM) to 5-hydroxyuridine (ho5U) to form 5-carboxymethoxyuridine (cmo5U) at position 34 in tRNAs. This Saccharophagus degradans (strain 2-40 / ATCC 43961 / DSM 17024) protein is tRNA U34 carboxymethyltransferase.